Here is a 289-residue protein sequence, read N- to C-terminus: Inorganic pyrophosphatase (289 aa).

R80 provides a ligand contact to diphosphate. Mg(2+)-binding residues include D117, D122, and D154.

Belongs to the PPase family. As to quaternary structure, homodimer. Mg(2+) serves as cofactor.

The protein localises to the cytoplasm. The enzyme catalyses diphosphate + H2O = 2 phosphate + H(+). The chain is Inorganic pyrophosphatase (ppa1) from Schizosaccharomyces pombe (strain 972 / ATCC 24843) (Fission yeast).